Consider the following 313-residue polypeptide: Protein EMSY-LIKE 2 (313 aa).

The 88-residue stretch at 1-88 (MEAQIHILEQ…HQSLDVHPSP (88 aa)) folds into the ENT domain. The stretch at 35–58 (MTNLRKELRISDDENRQLLNNVHN) forms a coiled coil. Disordered regions lie at residues 84 to 106 (VHPS…YPSI) and 195 to 229 (LNVG…REHL). A compositionally biased stretch (basic residues) spans 206–219 (GNRRTLSHGGRGRG). Positions 267-293 (HELDKAKKLLKEHEQALIAAIARLTDA) form a coiled coil. Ser-294 carries the phosphoserine modification. Positions 294-313 (SDYESDGEEPYSHELPMLLG) are disordered.

Interacts with EDM2 in nucleus.

The protein localises to the nucleus. Probably involved in the regulation of chromatin states. Contributes to RPP7-mediated and basal immunity, especially against Hyaloperonospora arabidopsidis isolate Hiks1. Regulates negatively EDM2-dependent floral transition. This is Protein EMSY-LIKE 2 from Arabidopsis thaliana (Mouse-ear cress).